A 545-amino-acid chain; its full sequence is CTP synthase (545 aa).

Residues 1–267 (MTKFIFVTGG…AEQVLNLLQM (267 aa)) are amidoligase domain. Ser-13 serves as a coordination point for CTP. Ser-13 is a binding site for UTP. Residues 14 to 19 (SIGKGI) and Asp-71 each bind ATP. 2 residues coordinate Mg(2+): Asp-71 and Glu-141. CTP is bound by residues 148-150 (DIE), 188-193 (KTKPTQ), and Lys-224. UTP is bound by residues 188-193 (KTKPTQ) and Lys-224. A Glutamine amidotransferase type-1 domain is found at 292 to 534 (EIAIVGKYVQ…IQAAIALSLS (243 aa)). Gly-354 lines the L-glutamine pocket. Cys-381 functions as the Nucleophile; for glutamine hydrolysis in the catalytic mechanism. Residues 382 to 385 (LGMQ), Glu-405, and Arg-462 contribute to the L-glutamine site. Residues His-507 and Glu-509 contribute to the active site.

This sequence belongs to the CTP synthase family. Homotetramer.

The catalysed reaction is UTP + L-glutamine + ATP + H2O = CTP + L-glutamate + ADP + phosphate + 2 H(+). The enzyme catalyses L-glutamine + H2O = L-glutamate + NH4(+). It catalyses the reaction UTP + NH4(+) + ATP = CTP + ADP + phosphate + 2 H(+). The protein operates within pyrimidine metabolism; CTP biosynthesis via de novo pathway; CTP from UDP: step 2/2. With respect to regulation, allosterically activated by GTP, when glutamine is the substrate; GTP has no effect on the reaction when ammonia is the substrate. The allosteric effector GTP functions by stabilizing the protein conformation that binds the tetrahedral intermediate(s) formed during glutamine hydrolysis. Inhibited by the product CTP, via allosteric rather than competitive inhibition. In terms of biological role, catalyzes the ATP-dependent amination of UTP to CTP with either L-glutamine or ammonia as the source of nitrogen. Regulates intracellular CTP levels through interactions with the four ribonucleotide triphosphates. This chain is CTP synthase, found in Nostoc punctiforme (strain ATCC 29133 / PCC 73102).